Consider the following 429-residue polypeptide: MKLQKPKGTQDILPAESAKWQYVEGFAREIFKRYNYAEVRTPIFEHYEVISRSVGDTTDIVTKEMYDFYDKGDRHITLRPEGTAPVVRSYVENKLFAPEVQKPSKFYYMGPMFRYERPQAGRLRQFHQIGVECFGSSNPATDVETIAMAAHFLKEIGIQGVKLHLNTLGNPESRAAYRQALIDYLTPLKETLSKDSQRRLEENPLRVLDSKEKEDKVAVENAPSILDFLDEESQTHFDAVRQMLENLGVDYIIDTNMVRGLDYYNHTIFEFITEIEGNDLTVCAGGRYDGLVAYFGGPETAGFGFGLGVERLLLILEKQGVTLPIENALDVYIAVLGEGANAKALELVQALRQQGFKAERDYLNRKLKAQFKSADVFVAKTLITLGESEVESGQVTVKNNQTREEVQVSLETISQNFSEIFEKLGFYTQ.

It belongs to the class-II aminoacyl-tRNA synthetase family. In terms of assembly, homodimer.

The protein resides in the cytoplasm. The catalysed reaction is tRNA(His) + L-histidine + ATP = L-histidyl-tRNA(His) + AMP + diphosphate + H(+). The protein is Histidine--tRNA ligase of Streptococcus pneumoniae (strain Hungary19A-6).